We begin with the raw amino-acid sequence, 120 residues long: Large ribosomal subunit protein bL17 (120 aa).

The protein belongs to the bacterial ribosomal protein bL17 family. In terms of assembly, part of the 50S ribosomal subunit. Contacts protein L32.

The protein is Large ribosomal subunit protein bL17 of Shouchella clausii (strain KSM-K16) (Alkalihalobacillus clausii).